The sequence spans 238 residues: tRNA1(Val) (adenine(37)-N6)-methyltransferase (238 aa).

The protein belongs to the methyltransferase superfamily. tRNA (adenine-N(6)-)-methyltransferase family.

It localises to the cytoplasm. The enzyme catalyses adenosine(37) in tRNA1(Val) + S-adenosyl-L-methionine = N(6)-methyladenosine(37) in tRNA1(Val) + S-adenosyl-L-homocysteine + H(+). Functionally, specifically methylates the adenine in position 37 of tRNA(1)(Val) (anticodon cmo5UAC). The chain is tRNA1(Val) (adenine(37)-N6)-methyltransferase from Shewanella baltica (strain OS223).